The primary structure comprises 273 residues: Glutamate racemase (273 aa).

Residues 17-18 (DS) and 49-50 (YG) each bind substrate. C80 acts as the Proton donor/acceptor in catalysis. 81 to 82 (NT) is a substrate binding site. The Proton donor/acceptor role is filled by C190. A substrate-binding site is contributed by 191-192 (TH).

The protein belongs to the aspartate/glutamate racemases family.

The catalysed reaction is L-glutamate = D-glutamate. Its pathway is cell wall biogenesis; peptidoglycan biosynthesis. Functionally, provides the (R)-glutamate required for cell wall biosynthesis. This chain is Glutamate racemase, found in Corynebacterium glutamicum (strain ATCC 13032 / DSM 20300 / JCM 1318 / BCRC 11384 / CCUG 27702 / LMG 3730 / NBRC 12168 / NCIMB 10025 / NRRL B-2784 / 534).